The sequence spans 123 residues: NADH-quinone oxidoreductase subunit A (123 aa).

3 helical membrane passes run 11 to 31 (YLPI…IMIL), 64 to 84 (ICFY…AFLV), and 93 to 113 (IGKI…IGFI).

The protein belongs to the complex I subunit 3 family. NDH-1 is composed of 14 different subunits. Subunits NuoA, H, J, K, L, M, N constitute the membrane sector of the complex.

It is found in the cell inner membrane. It carries out the reaction a quinone + NADH + 5 H(+)(in) = a quinol + NAD(+) + 4 H(+)(out). NDH-1 shuttles electrons from NADH, via FMN and iron-sulfur (Fe-S) centers, to quinones in the respiratory chain. The immediate electron acceptor for the enzyme in this species is believed to be ubiquinone. Couples the redox reaction to proton translocation (for every two electrons transferred, four hydrogen ions are translocated across the cytoplasmic membrane), and thus conserves the redox energy in a proton gradient. The sequence is that of NADH-quinone oxidoreductase subunit A from Rickettsia conorii (strain ATCC VR-613 / Malish 7).